Reading from the N-terminus, the 542-residue chain is Chaperonin GroEL 3 (542 aa).

ATP is bound by residues 29 to 32, 86 to 90, Gly413, 477 to 479, and Asp493; these read TLGP, DGTTT, and NAA.

The protein belongs to the chaperonin (HSP60) family. As to quaternary structure, forms a cylinder of 14 subunits composed of two heptameric rings stacked back-to-back. Interacts with the co-chaperonin GroES.

It localises to the cytoplasm. It catalyses the reaction ATP + H2O + a folded polypeptide = ADP + phosphate + an unfolded polypeptide.. Its function is as follows. Together with its co-chaperonin GroES, plays an essential role in assisting protein folding. The GroEL-GroES system forms a nano-cage that allows encapsulation of the non-native substrate proteins and provides a physical environment optimized to promote and accelerate protein folding. The sequence is that of Chaperonin GroEL 3 from Frankia alni (strain DSM 45986 / CECT 9034 / ACN14a).